We begin with the raw amino-acid sequence, 177 residues long: UPF0340 protein STH78 (177 aa).

The protein belongs to the UPF0340 family.

The sequence is that of UPF0340 protein STH78 from Symbiobacterium thermophilum (strain DSM 24528 / JCM 14929 / IAM 14863 / T).